The sequence spans 193 residues: Adenine phosphoribosyltransferase (193 aa).

It belongs to the purine/pyrimidine phosphoribosyltransferase family. In terms of assembly, homodimer.

The protein localises to the cytoplasm. The enzyme catalyses AMP + diphosphate = 5-phospho-alpha-D-ribose 1-diphosphate + adenine. It participates in purine metabolism; AMP biosynthesis via salvage pathway; AMP from adenine: step 1/1. Catalyzes a salvage reaction resulting in the formation of AMP, that is energically less costly than de novo synthesis. This Bifidobacterium longum subsp. infantis (strain ATCC 15697 / DSM 20088 / JCM 1222 / NCTC 11817 / S12) protein is Adenine phosphoribosyltransferase.